The primary structure comprises 574 residues: Membrane protein insertase YidC (574 aa).

Transmembrane regions (helical) follow at residues 6 to 26 (VFLI…WGKD), 356 to 376 (FSIM…LHSF), 380 to 400 (WGWA…PLSA), 447 to 467 (GGCL…WVLV), 489 to 509 (PYFI…KLTP), and 525 to 545 (PLVF…YWVV).

Belongs to the OXA1/ALB3/YidC family. Type 1 subfamily. In terms of assembly, interacts with the Sec translocase complex via SecD. Specifically interacts with transmembrane segments of nascent integral membrane proteins during membrane integration.

The protein resides in the cell inner membrane. In terms of biological role, required for the insertion and/or proper folding and/or complex formation of integral membrane proteins into the membrane. Involved in integration of membrane proteins that insert both dependently and independently of the Sec translocase complex, as well as at least some lipoproteins. Aids folding of multispanning membrane proteins. The protein is Membrane protein insertase YidC of Xanthomonas axonopodis pv. citri (strain 306).